A 624-amino-acid chain; its full sequence is Adenine deaminase 1 (624 aa).

The protein belongs to the metallo-dependent hydrolases superfamily. Adenine deaminase family. Requires Mn(2+) as cofactor.

The enzyme catalyses adenine + H2O + H(+) = hypoxanthine + NH4(+). The protein is Adenine deaminase 1 of Bradyrhizobium sp. (strain ORS 278).